Reading from the N-terminus, the 461-residue chain is Bifunctional protein GlmU (461 aa).

Residues M1–R229 form a pyrophosphorylase region. UDP-N-acetyl-alpha-D-glucosamine contacts are provided by residues L8–G11, K22, Q72, and G77–T78. Residue D102 participates in Mg(2+) binding. The UDP-N-acetyl-alpha-D-glucosamine site is built by G139, E154, N169, and N227. Residue N227 coordinates Mg(2+). Residues I230–D250 form a linker region. Residues G251–K461 are N-acetyltransferase. R332 and K350 together coordinate UDP-N-acetyl-alpha-D-glucosamine. Catalysis depends on H362, which acts as the Proton acceptor. UDP-N-acetyl-alpha-D-glucosamine contacts are provided by Y365 and N376. Acetyl-CoA contacts are provided by A422 and R439.

The protein in the N-terminal section; belongs to the N-acetylglucosamine-1-phosphate uridyltransferase family. This sequence in the C-terminal section; belongs to the transferase hexapeptide repeat family. In terms of assembly, homotrimer. The cofactor is Mg(2+).

The protein localises to the cytoplasm. It carries out the reaction alpha-D-glucosamine 1-phosphate + acetyl-CoA = N-acetyl-alpha-D-glucosamine 1-phosphate + CoA + H(+). The catalysed reaction is N-acetyl-alpha-D-glucosamine 1-phosphate + UTP + H(+) = UDP-N-acetyl-alpha-D-glucosamine + diphosphate. The protein operates within nucleotide-sugar biosynthesis; UDP-N-acetyl-alpha-D-glucosamine biosynthesis; N-acetyl-alpha-D-glucosamine 1-phosphate from alpha-D-glucosamine 6-phosphate (route II): step 2/2. It functions in the pathway nucleotide-sugar biosynthesis; UDP-N-acetyl-alpha-D-glucosamine biosynthesis; UDP-N-acetyl-alpha-D-glucosamine from N-acetyl-alpha-D-glucosamine 1-phosphate: step 1/1. Its pathway is bacterial outer membrane biogenesis; LPS lipid A biosynthesis. Catalyzes the last two sequential reactions in the de novo biosynthetic pathway for UDP-N-acetylglucosamine (UDP-GlcNAc). The C-terminal domain catalyzes the transfer of acetyl group from acetyl coenzyme A to glucosamine-1-phosphate (GlcN-1-P) to produce N-acetylglucosamine-1-phosphate (GlcNAc-1-P), which is converted into UDP-GlcNAc by the transfer of uridine 5-monophosphate (from uridine 5-triphosphate), a reaction catalyzed by the N-terminal domain. The chain is Bifunctional protein GlmU from Lactobacillus delbrueckii subsp. bulgaricus (strain ATCC 11842 / DSM 20081 / BCRC 10696 / JCM 1002 / NBRC 13953 / NCIMB 11778 / NCTC 12712 / WDCM 00102 / Lb 14).